We begin with the raw amino-acid sequence, 550 residues long: Hydroxylamine reductase (550 aa).

The [2Fe-2S] cluster site is built by cysteine 3, cysteine 6, cysteine 18, and cysteine 25. 8 residues coordinate hybrid [4Fe-2O-2S] cluster: histidine 249, glutamate 273, cysteine 317, cysteine 405, cysteine 433, cysteine 458, glutamate 492, and lysine 494. Cysteine 405 is subject to Cysteine persulfide.

It belongs to the HCP family. [2Fe-2S] cluster is required as a cofactor. It depends on hybrid [4Fe-2O-2S] cluster as a cofactor.

The protein resides in the cytoplasm. The catalysed reaction is A + NH4(+) + H2O = hydroxylamine + AH2 + H(+). Functionally, catalyzes the reduction of hydroxylamine to form NH(3) and H(2)O. The protein is Hydroxylamine reductase of Yersinia pseudotuberculosis serotype O:1b (strain IP 31758).